Consider the following 396-residue polypeptide: Chalcone synthase B (396 aa).

Cysteine 170 is a catalytic residue.

The protein belongs to the thiolase-like superfamily. Chalcone/stilbene synthases family.

The catalysed reaction is (E)-4-coumaroyl-CoA + 3 malonyl-CoA + 3 H(+) = 2',4,4',6'-tetrahydroxychalcone + 3 CO2 + 4 CoA. Its pathway is secondary metabolite biosynthesis; flavonoid biosynthesis. Functionally, the primary product of this enzyme is 4,2',4',6'-tetrahydroxychalcone (also termed naringenin-chalcone or chalcone) which can under specific conditions spontaneously isomerize into naringenin. The protein is Chalcone synthase B (CHSB) of Ipomoea purpurea (Common morning glory).